The sequence spans 168 residues: Large ribosomal subunit protein uL10 (168 aa).

This sequence belongs to the universal ribosomal protein uL10 family. In terms of assembly, part of the ribosomal stalk of the 50S ribosomal subunit. The N-terminus interacts with L11 and the large rRNA to form the base of the stalk. The C-terminus forms an elongated spine to which L12 dimers bind in a sequential fashion forming a multimeric L10(L12)X complex.

Its function is as follows. Forms part of the ribosomal stalk, playing a central role in the interaction of the ribosome with GTP-bound translation factors. The sequence is that of Large ribosomal subunit protein uL10 from Acinetobacter baylyi (strain ATCC 33305 / BD413 / ADP1).